Here is a 536-residue protein sequence, read N- to C-terminus: Chaperonin GroEL 2 (536 aa).

Residues 29 to 32, 86 to 90, Gly413, 476 to 478, and Asp492 each bind ATP; these read TLGP, DGTTT, and NAA.

The protein belongs to the chaperonin (HSP60) family. In terms of assembly, forms a cylinder of 14 subunits composed of two heptameric rings stacked back-to-back. Interacts with the co-chaperonin GroES.

It is found in the cytoplasm. The enzyme catalyses ATP + H2O + a folded polypeptide = ADP + phosphate + an unfolded polypeptide.. Together with its co-chaperonin GroES, plays an essential role in assisting protein folding. The GroEL-GroES system forms a nano-cage that allows encapsulation of the non-native substrate proteins and provides a physical environment optimized to promote and accelerate protein folding. This Moorella thermoacetica (strain ATCC 39073 / JCM 9320) protein is Chaperonin GroEL 2.